We begin with the raw amino-acid sequence, 440 residues long: Polyprenol-phosphate-mannose-dependent alpha-(1-2)-phosphatidylinositol mannoside mannosyltransferase (440 aa).

Transmembrane regions (helical) follow at residues L15 to V35, L87 to I107, A109 to W129, A144 to I161, N164 to P184, L193 to L213, T224 to V244, P281 to A301, A316 to W336, V360 to L380, and L395 to S415. A disordered region spans residues T419–G440.

This sequence belongs to the glycosyltransferase 87 family.

The protein resides in the cell membrane. The protein operates within phospholipid metabolism; phosphatidylinositol metabolism. Responsible for the addition of alpha-(1-2) mannose branches to the linear mannan core on the biosynthetic pathway to mature Lipoarabinomannan (LAM). The sequence is that of Polyprenol-phosphate-mannose-dependent alpha-(1-2)-phosphatidylinositol mannoside mannosyltransferase from Mycolicibacterium smegmatis (strain ATCC 700084 / mc(2)155) (Mycobacterium smegmatis).